The sequence spans 145 residues: Arginine repressor (145 aa).

This sequence belongs to the ArgR family.

The protein localises to the cytoplasm. Its pathway is amino-acid biosynthesis; L-arginine biosynthesis [regulation]. Regulates arginine biosynthesis genes. The polypeptide is Arginine repressor (Streptococcus pyogenes serotype M6 (strain ATCC BAA-946 / MGAS10394)).